Reading from the N-terminus, the 179-residue chain is Large ribosomal subunit protein uL5 (179 aa).

The protein belongs to the universal ribosomal protein uL5 family. As to quaternary structure, part of the 50S ribosomal subunit; part of the 5S rRNA/L5/L18/L25 subcomplex. Contacts the 5S rRNA and the P site tRNA. Forms a bridge to the 30S subunit in the 70S ribosome.

Functionally, this is one of the proteins that bind and probably mediate the attachment of the 5S RNA into the large ribosomal subunit, where it forms part of the central protuberance. In the 70S ribosome it contacts protein S13 of the 30S subunit (bridge B1b), connecting the 2 subunits; this bridge is implicated in subunit movement. Contacts the P site tRNA; the 5S rRNA and some of its associated proteins might help stabilize positioning of ribosome-bound tRNAs. The chain is Large ribosomal subunit protein uL5 from Bacillus anthracis (strain A0248).